Consider the following 314-residue polypeptide: Olfactory receptor 1E2 (314 aa).

Topologically, residues 1 to 25 (MMGQNQTSISDFLLLGLPIQPEQQN) are extracellular. Asn5 carries N-linked (GlcNAc...) asparagine glycosylation. The chain crosses the membrane as a helical span at residues 26 to 49 (LCYALFLAMYLTTLLGNLLIIVLI). Residues 50–57 (RLDSHLHT) lie on the Cytoplasmic side of the membrane. Residues 58–79 (PMYLFLSNLSFSDLCFSSVTIP) form a helical membrane-spanning segment. Residues 80–100 (KLLQNMQNQDPSIPYADCLTQ) lie on the Extracellular side of the membrane. A disulfide bond links Cys97 and Cys189. A helical transmembrane segment spans residues 101–120 (MHFFLLFGDLESFLLVAMAY). At 121-139 (DRYVAICFPLHYTAIMSPM) the chain is on the cytoplasmic side. The chain crosses the membrane as a helical span at residues 140 to 158 (LCLSVVALSWVLTTFHAML). At 159-196 (HTLLMARLCFCADNVIPHFFCDMSALLKLACSDTRVNE) the chain is on the extracellular side. Residues 197-219 (WVIFIMGGLIVVIPFLLILGSYA) form a helical membrane-spanning segment. The Cytoplasmic segment spans residues 220–236 (RIVSSILKVPSFKGICK). Residues 237 to 260 (ALSTCGSHLSVVSLFYGTVIGLYL) traverse the membrane as a helical segment. Residues 261–272 (CPSANSSTLKDT) lie on the Extracellular side of the membrane. Asn265 carries N-linked (GlcNAc...) asparagine glycosylation. Residues 273–292 (VMAMMYTVVTPMLNPFIYSL) form a helical membrane-spanning segment. Topologically, residues 293-314 (RNRDMKGALERVICKRKNPFLL) are cytoplasmic.

The protein belongs to the G-protein coupled receptor 1 family.

Its subcellular location is the cell membrane. Its function is as follows. Odorant receptor. The protein is Olfactory receptor 1E2 (OR1E2) of Pan troglodytes (Chimpanzee).